We begin with the raw amino-acid sequence, 168 residues long: Peptidoglycan-associated lipoprotein (168 aa).

An N-terminal signal peptide occupies residues 1 to 24 (MGRIAALTRNPVMIALVAMLAIAG). Cysteine 25 carries the N-palmitoyl cysteine lipid modification. Cysteine 25 carries S-diacylglycerol cysteine lipidation. The region spanning 50-167 (AQDFTVNIGD…RAVTTLSGAG (118 aa)) is the OmpA-like domain.

The protein belongs to the Pal lipoprotein family. In terms of assembly, the Tol-Pal system is composed of five core proteins: the inner membrane proteins TolA, TolQ and TolR, the periplasmic protein TolB and the outer membrane protein Pal. They form a network linking the inner and outer membranes and the peptidoglycan layer.

It is found in the cell outer membrane. Part of the Tol-Pal system, which plays a role in outer membrane invagination during cell division and is important for maintaining outer membrane integrity. The chain is Peptidoglycan-associated lipoprotein from Mesorhizobium japonicum (strain LMG 29417 / CECT 9101 / MAFF 303099) (Mesorhizobium loti (strain MAFF 303099)).